The chain runs to 32 residues: Seminal plasma protein PDC-109 (32 aa).

The disordered stretch occupies residues 1–32 (DQDEGVSTEPTQVGPAELHNDETCVGPLVYRN). O-linked (GalNAc...) threonine glycosylation is present at T11. One can recognise a Fibronectin type-II domain in the interval 19 to 32 (HNDETCVGPLVYRN).

The protein belongs to the seminal plasma protein family. Homodimer.

Its subcellular location is the secreted. Its function is as follows. Could enhance the fertilizing capacity of bull spermatozoa upon interaction with heparin-like glycosaminoglycans present in the female genital tract. Exhibits both simulatory and inhibitory actions on the release of pituitary gonadotropins. Binds to heparin and gelatin. In Bos indicus (Zebu), this protein is Seminal plasma protein PDC-109.